A 376-amino-acid chain; its full sequence is Chaperone protein DnaJ (376 aa).

A J domain is found at 5–70 (DYYEVLGVGR…DKKAAYDQFG (66 aa)). The segment at 132-210 (GLTKELRIPT…CHGDGRVEKS (79 aa)) adopts a CR-type zinc-finger fold. Zn(2+) contacts are provided by cysteine 145, cysteine 148, cysteine 162, cysteine 165, cysteine 184, cysteine 187, cysteine 198, and cysteine 201. 4 CXXCXGXG motif repeats span residues 145–152 (CDLCDGSG), 162–169 (CTTCHGQG), 184–191 (CPTCHGRG), and 198–205 (CTKCHGDG).

The protein belongs to the DnaJ family. As to quaternary structure, homodimer. Zn(2+) is required as a cofactor.

The protein localises to the cytoplasm. In terms of biological role, participates actively in the response to hyperosmotic and heat shock by preventing the aggregation of stress-denatured proteins and by disaggregating proteins, also in an autonomous, DnaK-independent fashion. Unfolded proteins bind initially to DnaJ; upon interaction with the DnaJ-bound protein, DnaK hydrolyzes its bound ATP, resulting in the formation of a stable complex. GrpE releases ADP from DnaK; ATP binding to DnaK triggers the release of the substrate protein, thus completing the reaction cycle. Several rounds of ATP-dependent interactions between DnaJ, DnaK and GrpE are required for fully efficient folding. Also involved, together with DnaK and GrpE, in the DNA replication of plasmids through activation of initiation proteins. This chain is Chaperone protein DnaJ, found in Shewanella putrefaciens (strain CN-32 / ATCC BAA-453).